Consider the following 342-residue polypeptide: Ribosomal RNA small subunit methyltransferase C (342 aa).

This sequence belongs to the methyltransferase superfamily. RsmC family. In terms of assembly, monomer.

Its subcellular location is the cytoplasm. The catalysed reaction is guanosine(1207) in 16S rRNA + S-adenosyl-L-methionine = N(2)-methylguanosine(1207) in 16S rRNA + S-adenosyl-L-homocysteine + H(+). Functionally, specifically methylates the guanine in position 1207 of 16S rRNA in the 30S particle. The protein is Ribosomal RNA small subunit methyltransferase C of Salmonella heidelberg (strain SL476).